The primary structure comprises 1174 residues: Probable DNA-directed RNA polymerase I subunit RPA2 (1174 aa).

Over residues 1–16 (MSFQTLERERTFKNPP) the composition is skewed to basic and acidic residues. The tract at residues 1–23 (MSFQTLERERTFKNPPKDGTSFP) is disordered. Residues 1089–1118 (CRDCGSIISIMSTISMNGVGSASEVRCRSC) form a C4-type zinc finger.

Belongs to the RNA polymerase beta chain family. As to quaternary structure, component of the RNA polymerase I (Pol I) complex consisting of 14 subunits.

It is found in the nucleus. The protein resides in the nucleolus. The catalysed reaction is RNA(n) + a ribonucleoside 5'-triphosphate = RNA(n+1) + diphosphate. DNA-dependent RNA polymerase catalyzes the transcription of DNA into RNA using the four ribonucleoside triphosphates as substrates. Second largest core component of RNA polymerase I which synthesizes ribosomal RNA precursors. Proposed to contribute to the polymerase catalytic activity and forms the polymerase active center together with the largest subunit. Pol I is composed of mobile elements and RPA2 is part of the core element with the central large cleft and probably a clamp element that moves to open and close the cleft. This Schizosaccharomyces pombe (strain 972 / ATCC 24843) (Fission yeast) protein is Probable DNA-directed RNA polymerase I subunit RPA2 (rpa2).